Consider the following 234-residue polypeptide: Cell adhesion molecule CEACAM15 (234 aa).

The first 32 residues, methionine 1 to alanine 32, serve as a signal peptide directing secretion. N-linked (GlcNAc...) asparagine glycosylation is found at asparagine 28, asparagine 75, asparagine 151, and asparagine 184. One can recognise an Ig-like C2-type domain in the interval proline 146–proline 226. Residues cysteine 165 and cysteine 213 are joined by a disulfide bond.

The protein belongs to the immunoglobulin superfamily. CEA family. Detected in placenta.

The sequence is that of Cell adhesion molecule CEACAM15 from Mus musculus (Mouse).